Reading from the N-terminus, the 216-residue chain is Large ribosomal subunit protein eL15 (216 aa).

Positions 170–188 (RGLRKSKGFKGTVKHKWSR) are enriched in basic residues. The interval 170–201 (RGLRKSKGFKGTVKHKWSRKQKEREEKKRHEA) is disordered. The segment covering 189–201 (KQKEREEKKRHEA) has biased composition (basic and acidic residues).

The protein belongs to the eukaryotic ribosomal protein eL15 family.

The protein is Large ribosomal subunit protein eL15 of Saccharolobus islandicus (strain M.16.27) (Sulfolobus islandicus).